We begin with the raw amino-acid sequence, 476 residues long: Bifunctional protein HldE (476 aa).

The segment at 1 to 319 (MKVSLPAFEK…EALALHHGES (319 aa)) is ribokinase. Residue 195–198 (NMSE) coordinates ATP. Aspartate 264 is an active-site residue. The cytidylyltransferase stretch occupies residues 345–476 (MTNGCFDILH…AIIQNIMANQ (132 aa)).

The protein in the N-terminal section; belongs to the carbohydrate kinase PfkB family. It in the C-terminal section; belongs to the cytidylyltransferase family. As to quaternary structure, homodimer.

The catalysed reaction is D-glycero-beta-D-manno-heptose 7-phosphate + ATP = D-glycero-beta-D-manno-heptose 1,7-bisphosphate + ADP + H(+). The enzyme catalyses D-glycero-beta-D-manno-heptose 1-phosphate + ATP + H(+) = ADP-D-glycero-beta-D-manno-heptose + diphosphate. It participates in nucleotide-sugar biosynthesis; ADP-L-glycero-beta-D-manno-heptose biosynthesis; ADP-L-glycero-beta-D-manno-heptose from D-glycero-beta-D-manno-heptose 7-phosphate: step 1/4. It functions in the pathway nucleotide-sugar biosynthesis; ADP-L-glycero-beta-D-manno-heptose biosynthesis; ADP-L-glycero-beta-D-manno-heptose from D-glycero-beta-D-manno-heptose 7-phosphate: step 3/4. Its function is as follows. Catalyzes the phosphorylation of D-glycero-D-manno-heptose 7-phosphate at the C-1 position to selectively form D-glycero-beta-D-manno-heptose-1,7-bisphosphate. Functionally, catalyzes the ADP transfer from ATP to D-glycero-beta-D-manno-heptose 1-phosphate, yielding ADP-D-glycero-beta-D-manno-heptose. In Shewanella baltica (strain OS185), this protein is Bifunctional protein HldE.